A 108-amino-acid chain; its full sequence is Thioredoxin (108 aa).

One can recognise a Thioredoxin domain in the interval 2-108; it reads NKIIELTDQN…LKEFLDENIN (107 aa). Cys-32 and Cys-35 are joined by a disulfide.

It belongs to the thioredoxin family.

Functionally, participates in various redox reactions through the reversible oxidation of its active center dithiol to a disulfide and catalyzes dithiol-disulfide exchange reactions. This Buchnera aphidicola subsp. Acyrthosiphon pisum (strain APS) (Acyrthosiphon pisum symbiotic bacterium) protein is Thioredoxin (trxA).